The following is a 591-amino-acid chain: PE-PGRS family protein PE_PGRS5 (591 aa).

The PE domain maps to 1–93 (MSFVIAQPEM…AGAYASAEAA (93 aa)). A PGRS region spans residues 94–591 (NAGPNMLAAV…GGKGNNGNPG (498 aa)). 6 stretches are compositionally biased toward gly residues: residues 303–324 (GAGG…GNGG), 336–363 (ASGG…GHVS), 371–412 (GAGG…GDGG), 477–491 (SEAG…GGDG), 539–567 (AGTG…GVNG), and 579–591 (GATG…GNPG). Disordered stretches follow at residues 303-412 (GAGG…GDGG), 468-491 (GSVN…GGDG), and 539-591 (AGTG…GNPG).

The protein belongs to the mycobacterial PE family. PGRS subfamily. In terms of assembly, interacts with human TLR4.

It localises to the host endoplasmic reticulum. Its function is as follows. Involved in endoplasmic reticulum (ER) stress-mediated apoptosis through human Toll-like receptor 4 (TLR4) signaling pathway. Localizes to the host ER, leading to ER stress, disruption of intracellular Ca(2+) homeostasis and increase of nitric oxide (NO) and reactive oxygen species (ROS) levels. Stress response results in caspase-8 activation and apoptosis of macrophage cells. Apoptosis may lead to dissemination of the bacteria, thereby spreading the disease. This Mycobacterium tuberculosis (strain ATCC 25618 / H37Rv) protein is PE-PGRS family protein PE_PGRS5.